The sequence spans 361 residues: Hydroxycarboxylate dehydrogenase B (361 aa).

Residues His48, 122 to 124, 178 to 182, His234, Asn270, and 313 to 316 contribute to the NAD(+) site; these read GRI, LLDYA, and GEWE.

It belongs to the LDH2/MDH2 oxidoreductase family.

It carries out the reaction 2-hydroxyglutarate + NADP(+) = 2-oxoglutarate + NADPH + H(+). The enzyme catalyses 2-hydroxyglutarate + NAD(+) = 2-oxoglutarate + NADH + H(+). It catalyses the reaction 3-phenyllactate + NADP(+) = 3-phenylpyruvate + NADPH + H(+). The catalysed reaction is 3-phenyllactate + NAD(+) = 3-phenylpyruvate + NADH + H(+). It carries out the reaction (2R)-2-hydroxy-3-(4-hydroxyphenyl)propanoate + NAD(+) = 3-(4-hydroxyphenyl)pyruvate + NADH + H(+). The enzyme catalyses (2R)-2-hydroxy-3-(4-hydroxyphenyl)propanoate + NADP(+) = 3-(4-hydroxyphenyl)pyruvate + NADPH + H(+). It catalyses the reaction (2R)-3-(3,4-dihydroxyphenyl)lactate + NADP(+) = 3-(3,4-dihydroxyphenyl)pyruvate + NADPH + H(+). The catalysed reaction is (2R)-3-(3,4-dihydroxyphenyl)lactate + NAD(+) = 3-(3,4-dihydroxyphenyl)pyruvate + NADH + H(+). Catalyzes the NAD(P)H-dependent reduction of 2-oxoglutarate, phenylpyruvate and (4-hydroxyphenyl)pyruvate, leading to the respective 2-hydroxycarboxylate in vitro. Shows a preference for NADPH over NADH as a redox partner. Do not catalyze the reverse reactions. This is Hydroxycarboxylate dehydrogenase B from Escherichia coli O157:H7.